The following is a 363-amino-acid chain: dTDP-3-amino-3,6-dideoxy-alpha-D-galactopyranose transaminase (363 aa).

Lysine 185 bears the N6-(pyridoxal phosphate)lysine mark.

The protein belongs to the DegT/DnrJ/EryC1 family. Pyridoxal 5'-phosphate is required as a cofactor.

The enzyme catalyses dTDP-3-amino-3,6-dideoxy-alpha-D-galactopyranose + 2-oxoglutarate = dTDP-3-dehydro-6-deoxy-alpha-D-galactose + L-glutamate. Functionally, specifically aminates dTDP-6-deoxy-D-xylohex-3-ulose to form dTDP-D-Fucp3N in the biosynthesis of dTDP-3-acetamido-3,6-dideoxy-alpha-D-galactose, a glycan chain of the S-layer. This Aneurinibacillus thermoaerophilus protein is dTDP-3-amino-3,6-dideoxy-alpha-D-galactopyranose transaminase (fdtB).